The following is a 223-amino-acid chain: MASKLLRAVILGPPGSGKGTVCERIAQNFGLQHLSSGHLLRENLKTGTEVGDVAKQYLEKGLLVPDHVITRLMMSELETRSAQHWLLDGFPRTLVQAEALDGICDVDLVISLNIPFETLKDRLSRRWIHPSSGRVYNLDFNPPQVQGIDDITGEPLVQQEDDKPEAVAARLRRYKDAAKPVIELYKSRGVLHQFSGTETNRIWPYVYTLFSNKITPIQSKEAY.

Position 15-20 (15-20) interacts with a ribonucleoside 5'-triphosphate; it reads GSGKGT. An NMP region spans residues 35 to 64; that stretch reads SSGHLLRENLKTGTEVGDVAKQYLEKGLLV. AMP-binding residues include Ser-36 and Arg-41. Position 60 is an N6-succinyllysine (Lys-60). AMP contacts are provided by residues 62–64, 89–92, and Gln-96; these read LLV and GFPR. The interval 125 to 162 is LID; it reads RRWIHPSSGRVYNLDFNPPQVQGIDDITGEPLVQQEDD. A ribonucleoside 5'-triphosphate is bound by residues Arg-126 and 135–136; that span reads VY. An AMP-binding site is contributed by Arg-170. Lys-175 bears the N6-acetyllysine mark. Residues Lys-179 and Lys-186 each carry the N6-acetyllysine; alternate modification. N6-succinyllysine; alternate occurs at positions 179 and 186. Thr-199 lines the a ribonucleoside 5'-triphosphate pocket.

This sequence belongs to the adenylate kinase family. AK3 subfamily. As to quaternary structure, monomer. Interacts with SLC25A5/ANT2. In terms of tissue distribution, expressed in kidney, liver, stomach, brain, spinal cord, heart, ovary, oviduct, colon, jejunum, ileum and testis (at protein level). In the brain, expressed in the pyramidal cells of the cerebrum and glial cells in the cerebellum (at protein level). In the heart, expressed by myocytes (at protein level). In the kidney, expressed in the proximal to distal tubule in the cortex and the outer and inner zones of the medulla (at protein level). In the stomach, expressed in stratified squamous epithelia in the forestomach and in the gastric pit and mucus producing cells of the glandular stomach (at protein level). Expressed in epithelial cells of the jejunum, ileum, and colon (at protein level). In the testis, expressed by spermatocytes (at protein level). In the ovaries, expressed by oocytes, follicular epithelial cells, and corpus luteum cells (at protein level). In the oviduct, expressed in the epithelia of the isthmus and the ciliated cells of the ampulla (at protein level). Expressed in the pyramidal cells in the hippocampus.

It is found in the mitochondrion matrix. The catalysed reaction is a ribonucleoside 5'-phosphate + ATP = a ribonucleoside 5'-diphosphate + ADP. The enzyme catalyses AMP + ATP = 2 ADP. It carries out the reaction GTP + AMP = GDP + ADP. It catalyses the reaction CMP + ATP = CDP + ADP. The catalysed reaction is GTP + CMP = CDP + GDP. The enzyme catalyses dAMP + ATP = dADP + ADP. It carries out the reaction dCMP + ATP = dCDP + ADP. It catalyses the reaction a 2'-deoxyribonucleoside 5'-diphosphate + ATP = a 2'-deoxyribonucleoside 5'-triphosphate + ADP. The catalysed reaction is a ribonucleoside 5'-diphosphate + ATP = a ribonucleoside 5'-triphosphate + ADP. The enzyme catalyses GDP + ATP = GTP + ADP. It carries out the reaction CDP + GTP = CTP + GDP. It catalyses the reaction CDP + ATP = CTP + ADP. The catalysed reaction is UDP + ATP = UTP + ADP. The enzyme catalyses GTP + UDP = UTP + GDP. It carries out the reaction dADP + GTP = dATP + GDP. It catalyses the reaction dCDP + GTP = dCTP + GDP. The catalysed reaction is dCDP + ATP = dCTP + ADP. The enzyme catalyses dGDP + ATP = dGTP + ADP. It carries out the reaction dTDP + GTP = dTTP + GDP. It catalyses the reaction dTDP + ATP = dTTP + ADP. Its function is as follows. Broad-specificity mitochondrial nucleoside phosphate kinase involved in cellular nucleotide homeostasis by catalyzing nucleoside-phosphate interconversions. Similar to other adenylate kinases, preferentially catalyzes the phosphorylation of the nucleoside monophosphate AMP with ATP as phosphate donor to produce ADP. Phosphorylates only AMP when using GTP as phosphate donor. In vitro, can also catalyze the phosphorylation of CMP, dAMP and dCMP and use GTP as an alternate phosphate donor. Moreover, exhibits a diphosphate kinase activity, producing ATP, CTP, GTP, UTP, TTP, dATP, dCTP and dGTP from the corresponding diphosphate substrates with either ATP or GTP as phosphate donors. Plays a role in controlling cellular ATP levels by regulating phosphorylation and activation of the energy sensor protein kinase AMPK. Plays a protective role in the cellular response to oxidative stress. The protein is Adenylate kinase 4, mitochondrial of Mus musculus (Mouse).